We begin with the raw amino-acid sequence, 343 residues long: Polyprenyl transferase spyF (343 aa).

8 helical membrane-spanning segments follow: residues 38–58 (WLAVFSGGVSLPILIGNSHPL), 62–82 (VSVWATLLAGANQIATHPASI), 92–112 (LLCLICGYIFCGAGMVWNDWI), 138–158 (GFIWMMVHVAAMIPVTISTIL), 170–190 (LYIYPQYFLGFSLAWPGAIGW), 241–261 (AYVAAGSRIHMFLVILAGLVL), 273–293 (SGWLWASWMCVWALSFVHQLL), and 311–331 (FALGVWTIVACAAELGLSSGM).

The protein belongs to the UbiA prenyltransferase family. Mg(2+) is required as a cofactor.

The protein resides in the membrane. It carries out the reaction triacetate lactone + (2E,6E,10E)-geranylgeranyl diphosphate = (2E,6E,10E)-geranylgeranyl-triacetate lactone + diphosphate. It participates in secondary metabolite biosynthesis; terpenoid biosynthesis. Polyprenyl transferase; part of the gene cluster that mediates the biosynthesis of meroterpenoids called sartorypyrones. Within the pathway, spyF catalyzes the prenylation of triacetic acid lactone (TAL) to produce geranylgeranyl-triacetate lactone. The biosynthesis of sartorypyrones begins with the production of triacetic acid lactone (TAL) by the NR-PKS spyA using one molecule of acetyl-CoA and two molecules of malonyl-CoA. The prenyltransferase spyF then conjugates geranylgeranyl pyrophosphate (GGPP) to TAL to form geranylgeranyl-triacetate lactone, for which the pathway-specific geranylgeranyl pyrophosphate synthase (GGPS) spyE is required to provide GGPP. Subsequently, geranylgeranyl-triacetate lactone is epoxidized at the terminal olein by the FAD-dependent monooxygenase spyC, followed by cyclization of the terpenoid component catalyzed by the terpene cyclase spyD to produce both the bicyclic sartorypyrone F and the monocyclic sartorypyrone D. Finally, the last step of the biosynthesis involves the acetylation of the meroterpenoids sartorypyrones D and F by the acetyltransferase SpyB to produce sartorypyrones A and G, respectively. The chain is Polyprenyl transferase spyF from Aspergillus fumigatus (strain ATCC MYA-4609 / CBS 101355 / FGSC A1100 / Af293) (Neosartorya fumigata).